Consider the following 515-residue polypeptide: uncharacterized protein (515 aa).

The protein belongs to the AllF family.

This is an uncharacterized protein from Escherichia coli (strain K12).